Consider the following 610-residue polypeptide: UvrABC system protein C (610 aa).

In terms of domain architecture, GIY-YIG spans 16–94 (SQPGVYRMYD…IKLYQPRYNV (79 aa)). The UVR domain occupies 204-239 (DQVLTQLIARMEKASQDLAFEEAARIRDQIQAVRRV).

It belongs to the UvrC family. In terms of assembly, interacts with UvrB in an incision complex.

It is found in the cytoplasm. Its function is as follows. The UvrABC repair system catalyzes the recognition and processing of DNA lesions. UvrC both incises the 5' and 3' sides of the lesion. The N-terminal half is responsible for the 3' incision and the C-terminal half is responsible for the 5' incision. In Salmonella schwarzengrund (strain CVM19633), this protein is UvrABC system protein C.